The sequence spans 222 residues: 7-cyano-7-deazaguanine synthase (222 aa).

An ATP-binding site is contributed by 9-19 (LSGGLDSATAA). The Zn(2+) site is built by cysteine 190, cysteine 198, cysteine 201, and cysteine 204.

The protein belongs to the QueC family. The cofactor is Zn(2+).

The catalysed reaction is 7-carboxy-7-deazaguanine + NH4(+) + ATP = 7-cyano-7-deazaguanine + ADP + phosphate + H2O + H(+). Its pathway is purine metabolism; 7-cyano-7-deazaguanine biosynthesis. In terms of biological role, catalyzes the ATP-dependent conversion of 7-carboxy-7-deazaguanine (CDG) to 7-cyano-7-deazaguanine (preQ(0)). The sequence is that of 7-cyano-7-deazaguanine synthase from Synechococcus sp. (strain RCC307).